The primary structure comprises 232 residues: Large ribosomal subunit protein uL1 (232 aa).

It belongs to the universal ribosomal protein uL1 family. As to quaternary structure, part of the 50S ribosomal subunit.

Its function is as follows. Binds directly to 23S rRNA. The L1 stalk is quite mobile in the ribosome, and is involved in E site tRNA release. Protein L1 is also a translational repressor protein, it controls the translation of the L11 operon by binding to its mRNA. The chain is Large ribosomal subunit protein uL1 from Bacillus velezensis (strain DSM 23117 / BGSC 10A6 / LMG 26770 / FZB42) (Bacillus amyloliquefaciens subsp. plantarum).